Consider the following 852-residue polypeptide: DNA polymerase kappa (852 aa).

The UmuC domain maps to 102–357 (IVHVDMDAFY…LPIRKVSGIG (256 aa)). Mg(2+) contacts are provided by Asp106 and Asp197. The tract at residues 252-273 (FEDSPPDLQPQGSPFQLNSEEQ) is disordered. Residues 261–273 (PQGSPFQLNSEEQ) are compositionally biased toward polar residues. 2 UBZ4-type zinc fingers span residues 619-649 (TFICPVCFREQEGVSLEAFNEHVDECLDGPS) and 761-791 (ALVCPVCNLEQETSDLTLFNIHVDICLNKGI). Zn(2+) contacts are provided by Cys622, Cys625, His640, Cys644, Cys764, Cys767, His782, and Cys786. Residues 798-852 (SEGNSVKQPKESSRSTDRLQKASGRTKRPGTKTKSSTLKKTKPRDPRHTLDGFFK) form a disordered region. Basic and acidic residues predominate over residues 805-817 (QPKESSRSTDRLQ). Residues 821 to 839 (GRTKRPGTKTKSSTLKKTK) are compositionally biased toward basic residues. Residues 840–852 (PRDPRHTLDGFFK) are compositionally biased toward basic and acidic residues.

Belongs to the DNA polymerase type-Y family. Interacts with PCNA. Interacts with REV1. The cofactor is Mg(2+). It depends on Mn(2+) as a cofactor. As to expression, detected at low levels in heart, brain, lung, liver, kidney and testis.

The protein resides in the nucleus. It carries out the reaction DNA(n) + a 2'-deoxyribonucleoside 5'-triphosphate = DNA(n+1) + diphosphate. In terms of biological role, DNA polymerase specifically involved in DNA repair. Plays an important role in translesion synthesis, where the normal high-fidelity DNA polymerases cannot proceed and DNA synthesis stalls. Depending on the context, it inserts the correct base, but causes frequent base transitions, transversions and frameshifts. Lacks 3'-5' proofreading exonuclease activity. Forms a Schiff base with 5'-deoxyribose phosphate at abasic sites, but does not have lyase activity. The chain is DNA polymerase kappa (Polk) from Mus musculus (Mouse).